Reading from the N-terminus, the 206-residue chain is Threonine efflux protein (206 aa).

A helical membrane pass occupies residues 1-21; it reads MLMLFLTVAMVHIVALMSPGP. At 22–43 the chain is on the periplasmic side; the sequence is DFFFVSQTAVSRSRKEAMMGVL. The chain crosses the membrane as a helical span at residues 44–64; the sequence is GITCGVMVWAGIALLGLHLII. The Cytoplasmic portion of the chain corresponds to 65–66; it reads EK. Residues 67 to 87 traverse the membrane as a helical segment; sequence MAWLHTLIMVGGGLYLCWMGY. At 88–149 the chain is on the periplasmic side; sequence QMLRGALKKE…VGDNVGTTAR (62 aa). The chain crosses the membrane as a helical span at residues 150–173; that stretch reads WGIFALIIVETLAWFTVVASLFAL. Topologically, residues 174–206 are cytoplasmic; the sequence is PQMRRGYQRLAKWIDGFAGALFAGFGIHLIISR.

This sequence belongs to the Rht family.

The protein localises to the cell inner membrane. Conducts the efflux of threonine. This Escherichia coli O157:H7 protein is Threonine efflux protein (rhtC).